Here is a 749-residue protein sequence, read N- to C-terminus: Small G protein signaling modulator 3 (749 aa).

Residues 113–304 (GIPHGMRPQL…RIWDLFFYEG (192 aa)) form the Rab-GAP TBC domain. A Phosphoserine modification is found at S405. Positions 414–438 (EDDLEALKAKNIKQTELVADLREAI) form a coiled coil. The 60-residue stretch at 479-538 (SHRRRAKALLDFERHDDDELGFRKNDIITIISQKDEHCWVGELNGLRGWFPAKFVEVLDE) folds into the SH3 domain. The RUN domain occupies 554–717 (GVTDLVRGTL…FAFSLSQDWE (164 aa)).

Belongs to the small G protein signaling modulator family. In terms of assembly, interacts with GJA1. Interaction with GJA1 induces its degradation. Interacts (via RUN domain) with NF2 (via C-terminus). Interacts with RAB3A, RAB4A, RAB5A, RAB8A, RAB11A, RAP1A, RAP1B, RAP2A, RAP2B and PDCD6I. No interaction with RAB27A. No interaction with GJB1 or GJD2. Expressed in brain, liver, kidney and testis. Moderately expressed in heart, very weakly in lung and muscle. Not expressed in spleen.

The protein localises to the cytoplasm. Functionally, may play a cooperative role in NF2-mediated growth suppression of cells. May act as a modulator of small G protein RAB- and RAP-mediated neuronal signal transduction and vesicular transportation pathways. The polypeptide is Small G protein signaling modulator 3 (Rattus norvegicus (Rat)).